Here is a 397-residue protein sequence, read N- to C-terminus: DNA-directed RNA polymerase subunit Rpo1C (397 aa).

Belongs to the RNA polymerase beta' chain family. As to quaternary structure, part of the RNA polymerase complex.

The protein resides in the cytoplasm. It catalyses the reaction RNA(n) + a ribonucleoside 5'-triphosphate = RNA(n+1) + diphosphate. In terms of biological role, DNA-dependent RNA polymerase (RNAP) catalyzes the transcription of DNA into RNA using the four ribonucleoside triphosphates as substrates. Forms part of the jaw domain. In Halobacterium salinarum (strain ATCC 29341 / DSM 671 / R1), this protein is DNA-directed RNA polymerase subunit Rpo1C.